We begin with the raw amino-acid sequence, 489 residues long: Zeta-carotene desaturase (489 aa).

This sequence belongs to the zeta carotene desaturase family. It depends on NAD(+) as a cofactor. The cofactor is NADP(+). FAD is required as a cofactor.

It carries out the reaction 9,9'-di-cis-zeta-carotene + 2 a quinone = 7,7',9,9'-tetra-cis-lycopene + 2 a quinol. It participates in carotenoid biosynthesis; lycopene biosynthesis. In terms of biological role, catalyzes the conversion of zeta-carotene to lycopene via the intermediary of neurosporene. It carries out two consecutive desaturations (introduction of double bonds) at positions C-7 and C-7'. This chain is Zeta-carotene desaturase (crtQ), found in Synechocystis sp. (strain ATCC 27184 / PCC 6803 / Kazusa).